We begin with the raw amino-acid sequence, 91 residues long: UPF0298 protein spyM18_0447 (91 aa).

Belongs to the UPF0298 family.

It is found in the cytoplasm. In Streptococcus pyogenes serotype M18 (strain MGAS8232), this protein is UPF0298 protein spyM18_0447.